The following is a 456-amino-acid chain: Major facilitator superfamily domain-containing protein 10 (456 aa).

Transmembrane regions (helical) follow at residues 25–45 (VIIV…LLLP), 87–107 (VLFG…SAPL), and 114–136 (YLGR…AVWA). N-linked (GlcNAc...) asparagine glycosylation is present at Asn-159. 8 helical membrane passes run 179–199 (AVIG…GAFL), 203–223 (MVPW…FCFL), 278–298 (LVYF…SFLA), 311–328 (KMFF…GTYA), 345–365 (LLLV…TLGL), 366–386 (GLML…TMVS), 403–423 (SLGA…YWLT), and 424–444 (GAQV…LLLW).

This sequence belongs to the major facilitator superfamily. In terms of tissue distribution, esxpressed in luminal membrane of renal tubules. Expressed at the surface of eosinophils (at protein level).

Its subcellular location is the nucleus inner membrane. It localises to the cell membrane. Its function is as follows. Probable organic anion transporter which may serve as a transporter for some non-steroidal anti-inflammatory drugs (NSAIDs) as well as other organic anions across the luminal membranes of renal proximal tubules at the final excretion step into the urine. The protein is Major facilitator superfamily domain-containing protein 10 (Mfsd10) of Mus musculus (Mouse).